A 459-amino-acid polypeptide reads, in one-letter code: Anthocyanidin 3-O-glucoside 2''-O-glucosyltransferase (459 aa).

The active-site Proton acceptor is H20. H20 contacts an anthocyanidin. Catalysis depends on D117, which acts as the Charge relay. UDP-alpha-D-glucose-binding residues include T138, V335, Q337, H352, W355, S357, and E360. Position 375 (G375) interacts with an anthocyanidin. Residues D376 and Q377 each coordinate UDP-alpha-D-glucose.

Belongs to the UDP-glycosyltransferase family. As to expression, mainly expressed in the petals and tubes of flower buds at around 24 hours before flower opening.

It carries out the reaction an anthocyanidin 3-O-beta-D-glucoside + UDP-alpha-D-glucose = an anthocyanidin 3-O-sophoroside + UDP + 2 H(+). It functions in the pathway pigment biosynthesis; anthocyanin biosynthesis. Glycosyltransferase that mediates the glucosylation of anthocyanidin 3-O-glucosides to yield anthocyanidin 3-O-sophorosides. 3-O-sophoroside derivatives are required for the bright blue or red color of flowers. The polypeptide is Anthocyanidin 3-O-glucoside 2''-O-glucosyltransferase (3GGT) (Ipomoea nil (Japanese morning glory)).